We begin with the raw amino-acid sequence, 153 residues long: Aspartate carbamoyltransferase regulatory chain (153 aa).

Zn(2+) is bound by residues cysteine 109, cysteine 114, cysteine 138, and cysteine 141.

This sequence belongs to the PyrI family. In terms of assembly, contains catalytic and regulatory chains. The cofactor is Zn(2+).

Its function is as follows. Involved in allosteric regulation of aspartate carbamoyltransferase. The polypeptide is Aspartate carbamoyltransferase regulatory chain (Cronobacter sakazakii (strain ATCC BAA-894) (Enterobacter sakazakii)).